The primary structure comprises 945 residues: Netrin receptor UNC5B (945 aa).

The first 26 residues, 1–26, serve as a signal peptide directing secretion; the sequence is MRARSGARGALLLALLLCWDPTPSLA. The Extracellular portion of the chain corresponds to 27 to 377; the sequence is GIDSGGQALP…LEPSGDVALY (351 aa). The region spanning 48-145 is the Ig-like domain; the sequence is PHFLLEPEDA…SGTTKSRRAY (98 aa). 9 disulfides stabilise this stretch: cysteine 69–cysteine 130, cysteine 81–cysteine 128, cysteine 174–cysteine 225, cysteine 258–cysteine 295, cysteine 262–cysteine 299, cysteine 273–cysteine 285, cysteine 314–cysteine 348, cysteine 318–cysteine 353, and cysteine 326–cysteine 338. The region spanning 153-242 is the Ig-like C2-type domain; sequence KNFDQEPLAK…KRRSTTATVI (90 aa). Residue asparagine 222 is glycosylated (N-linked (GlcNAc...) asparagine). 2 TSP type-1 domains span residues 246–300 and 302–354; these read NGGW…TVCP and DGAW…GLCV. An N-linked (GlcNAc...) asparagine glycan is attached at asparagine 347. A helical membrane pass occupies residues 378–398; sequence AGLVVAVFVVLAVLMAVGVIV. Over 399 to 945 the chain is Cytoplasmic; sequence YRRNCRDFDT…LVAMTTDGDC (547 aa). A lipid anchor (S-palmitoyl cysteine) is attached at cysteine 403. One can recognise a ZU5 domain in the interval 543-686; that stretch reads SSVSGTFGCL…LGTYVFTGES (144 aa). The residue at position 581 (tyrosine 581) is a Phosphotyrosine. The tract at residues 689–838 is UPA domain; the sequence is RSAVKRLQLA…AETPAGSLDA (150 aa). The segment at 707–725 is interaction with DCC; sequence SLEYSLRVYCLEDTPAALK. The region spanning 865 to 943 is the Death domain; the sequence is KICNSLDAPN…EMLVAMTTDG (79 aa).

Belongs to the unc-5 family. As to quaternary structure, interacts with the cytoplasmic part of DCC. Interacts with GNAI2 via its cytoplasmic part. Interacts (via death domain) with DAPK1 (via death domain). Interacts (via extracellular domain) with FLRT3 (via extracellular domain); the interaction is direct. Interacts (via extracellular domain) with FLRT2 and FLRT3 (via extracellular domain), but has higher affinity for FLRT3. Identified in a complex with FLRT3 and ADGRL3; does not interact with ADGRL3 by itself. In terms of processing, phosphorylated on cytoplasmic tyrosine residues. Proteolytically cleaved by caspases during apoptosis. The cleavage does not take place when the receptor is associated with netrin ligand. Its cleavage by caspases is required to induce apoptosis. Post-translationally, palmitoylation is required for pro-apoptotic activity, but not for location at lipid rafts. In terms of tissue distribution, mainly expressed in regions of differentiating neurons. Expressed in the developing sensory ganglia that flank the spinal cord from E12, peaking at E14. Expressed in the roof plate region of the spinal cord from E14.

The protein localises to the cell membrane. It is found in the membrane raft. Functionally, receptor for netrin required for axon guidance. Mediates axon repulsion of neuronal growth cones in the developing nervous system upon ligand binding. Axon repulsion in growth cones may be caused by its association with DCC that may trigger signaling for repulsion. Functions as a netrin receptor that negatively regulates vascular branching during angiogenesis. Mediates retraction of tip cell filopodia on endothelial growth cones in response to netrin. It also acts as a dependence receptor required for apoptosis induction when not associated with netrin ligand. Mediates apoptosis by activating DAPK1. In the absence of NTN1, activates DAPK1 by reducing its autoinhibitory phosphorylation at Ser-308 thereby increasing its catalytic activity. The chain is Netrin receptor UNC5B (Unc5b) from Rattus norvegicus (Rat).